The primary structure comprises 254 residues: Ribonuclease PH (254 aa).

Residues arginine 90 and 128–130 (GTR) each bind phosphate.

It belongs to the RNase PH family. As to quaternary structure, homohexameric ring arranged as a trimer of dimers.

The enzyme catalyses tRNA(n+1) + phosphate = tRNA(n) + a ribonucleoside 5'-diphosphate. In terms of biological role, phosphorolytic 3'-5' exoribonuclease that plays an important role in tRNA 3'-end maturation. Removes nucleotide residues following the 3'-CCA terminus of tRNAs; can also add nucleotides to the ends of RNA molecules by using nucleoside diphosphates as substrates, but this may not be physiologically important. Probably plays a role in initiation of 16S rRNA degradation (leading to ribosome degradation) during starvation. This is Ribonuclease PH from Corynebacterium kroppenstedtii (strain DSM 44385 / JCM 11950 / CIP 105744 / CCUG 35717).